The following is a 168-amino-acid chain: Phosphopantetheine adenylyltransferase (168 aa).

Residue threonine 9 participates in substrate binding. Residues threonine 9–phenylalanine 10 and histidine 17 contribute to the ATP site. Lysine 41, leucine 73, and arginine 87 together coordinate substrate. ATP is bound by residues glycine 88 to arginine 90, glutamate 98, and tyrosine 123 to threonine 129.

Belongs to the bacterial CoaD family. Homohexamer. Mg(2+) serves as cofactor.

The protein localises to the cytoplasm. It carries out the reaction (R)-4'-phosphopantetheine + ATP + H(+) = 3'-dephospho-CoA + diphosphate. It participates in cofactor biosynthesis; coenzyme A biosynthesis; CoA from (R)-pantothenate: step 4/5. Functionally, reversibly transfers an adenylyl group from ATP to 4'-phosphopantetheine, yielding dephospho-CoA (dPCoA) and pyrophosphate. This is Phosphopantetheine adenylyltransferase from Paraburkholderia phymatum (strain DSM 17167 / CIP 108236 / LMG 21445 / STM815) (Burkholderia phymatum).